The sequence spans 504 residues: 26S proteasome non-ATPase regulatory subunit 3 (504 aa).

A PCI domain is found at 254-434; that stretch reads ARYFYYQGRI…GYLQSRENID (181 aa). The disordered stretch occupies residues 485–504; the sequence is KEEMERQAEESSDNEGDSDF. The span at 494 to 504 shows a compositional bias: acidic residues; the sequence is ESSDNEGDSDF.

It belongs to the proteasome subunit S3 family. As to quaternary structure, the 26S proteasome is composed of a core protease, known as the 20S proteasome, capped at one or both ends by the 19S regulatory complex (RC). The RC is composed of at least 18 different subunits in two subcomplexes, the base and the lid, which form the portions proximal and distal to the 20S proteolytic core, respectively.

In terms of biological role, acts as a regulatory subunit of the 26 proteasome which is involved in the ATP-dependent degradation of ubiquitinated proteins. The polypeptide is 26S proteasome non-ATPase regulatory subunit 3 (psmD3) (Dictyostelium discoideum (Social amoeba)).